A 457-amino-acid chain; its full sequence is Siroheme synthase 2 (457 aa).

Residues 1 to 204 (MDHLPIFCQL…DDRQAVADTT (204 aa)) form a precorrin-2 dehydrogenase /sirohydrochlorin ferrochelatase region. Residues 22–23 (DV) and 43–44 (LD) each bind NAD(+). Ser-128 bears the Phosphoserine mark. Residues 216-457 (GEVVLVGAGP…RDKLNWFSNH (242 aa)) form a uroporphyrinogen-III C-methyltransferase region. Pro-225 is a binding site for S-adenosyl-L-methionine. The active-site Proton acceptor is Asp-248. Lys-270 functions as the Proton donor in the catalytic mechanism. Residues 301–303 (GGD), Ile-306, 331–332 (TA), Met-382, and Gly-411 each bind S-adenosyl-L-methionine.

It in the N-terminal section; belongs to the precorrin-2 dehydrogenase / sirohydrochlorin ferrochelatase family. In the C-terminal section; belongs to the precorrin methyltransferase family.

The catalysed reaction is uroporphyrinogen III + 2 S-adenosyl-L-methionine = precorrin-2 + 2 S-adenosyl-L-homocysteine + H(+). It carries out the reaction precorrin-2 + NAD(+) = sirohydrochlorin + NADH + 2 H(+). It catalyses the reaction siroheme + 2 H(+) = sirohydrochlorin + Fe(2+). The protein operates within cofactor biosynthesis; adenosylcobalamin biosynthesis; precorrin-2 from uroporphyrinogen III: step 1/1. It participates in cofactor biosynthesis; adenosylcobalamin biosynthesis; sirohydrochlorin from precorrin-2: step 1/1. Its pathway is porphyrin-containing compound metabolism; siroheme biosynthesis; precorrin-2 from uroporphyrinogen III: step 1/1. It functions in the pathway porphyrin-containing compound metabolism; siroheme biosynthesis; siroheme from sirohydrochlorin: step 1/1. The protein operates within porphyrin-containing compound metabolism; siroheme biosynthesis; sirohydrochlorin from precorrin-2: step 1/1. Functionally, multifunctional enzyme that catalyzes the SAM-dependent methylations of uroporphyrinogen III at position C-2 and C-7 to form precorrin-2 via precorrin-1. Then it catalyzes the NAD-dependent ring dehydrogenation of precorrin-2 to yield sirohydrochlorin. Finally, it catalyzes the ferrochelation of sirohydrochlorin to yield siroheme. The chain is Siroheme synthase 2 from Klebsiella pneumoniae subsp. pneumoniae (strain ATCC 700721 / MGH 78578).